Reading from the N-terminus, the 183-residue chain is Calcium-binding protein M (183 aa).

Glycine 2 carries the N-myristoyl glycine lipid modification. EF-hand domains lie at 25–60 (EEVANIYGEFKKFDKDGNGSFDRKEFVLFFKSKLPN), 61–96 (YPEDNLNKLFDAFDSDKSNTIDFKELTVALSIIGKG), 97–132 (SAEDKLKVLFDIYDKDKSGILEKKEVDEMIALMKNV), and 142–177 (DIELFIVKLFEKIDKDKNNLISREEFLTEGARSPSL). 13 residues coordinate Ca(2+): aspartate 74, aspartate 76, serine 78, threonine 80, glutamate 85, aspartate 110, aspartate 112, serine 114, glutamate 121, aspartate 155, aspartate 157, asparagine 159, and glutamate 166.

Belongs to the recoverin family.

The protein is Calcium-binding protein M (cbpM) of Dictyostelium discoideum (Social amoeba).